Here is a 516-residue protein sequence, read N- to C-terminus: GMP synthase [glutamine-hydrolyzing] (516 aa).

The Glutamine amidotransferase type-1 domain maps to 8-198; sequence KILILDFGSQ…VVNICGCDTL (191 aa). Cys84 serves as the catalytic Nucleophile. Catalysis depends on residues His172 and Glu174. One can recognise a GMPS ATP-PPase domain in the interval 199–391; it reads WNIENIIEND…LGLPYNMLYR (193 aa). 226-232 provides a ligand contact to ATP; the sequence is SGGVDSS.

Homodimer.

The catalysed reaction is XMP + L-glutamine + ATP + H2O = GMP + L-glutamate + AMP + diphosphate + 2 H(+). It functions in the pathway purine metabolism; GMP biosynthesis; GMP from XMP (L-Gln route): step 1/1. Functionally, catalyzes the synthesis of GMP from XMP. The protein is GMP synthase [glutamine-hydrolyzing] of Francisella tularensis subsp. holarctica (strain FTNF002-00 / FTA).